We begin with the raw amino-acid sequence, 192 residues long: Peptidyl-tRNA hydrolase (192 aa).

Y17 provides a ligand contact to tRNA. Residue H22 is the Proton acceptor of the active site. TRNA is bound by residues Y68, N70, and N116.

The protein belongs to the PTH family. As to quaternary structure, monomer.

Its subcellular location is the cytoplasm. The enzyme catalyses an N-acyl-L-alpha-aminoacyl-tRNA + H2O = an N-acyl-L-amino acid + a tRNA + H(+). Hydrolyzes ribosome-free peptidyl-tRNAs (with 1 or more amino acids incorporated), which drop off the ribosome during protein synthesis, or as a result of ribosome stalling. In terms of biological role, catalyzes the release of premature peptidyl moieties from peptidyl-tRNA molecules trapped in stalled 50S ribosomal subunits, and thus maintains levels of free tRNAs and 50S ribosomes. The polypeptide is Peptidyl-tRNA hydrolase (Mycolicibacterium vanbaalenii (strain DSM 7251 / JCM 13017 / BCRC 16820 / KCTC 9966 / NRRL B-24157 / PYR-1) (Mycobacterium vanbaalenii)).